A 136-amino-acid chain; its full sequence is Small ribosomal subunit protein uS12 (136 aa).

Residues 1-28 (MPTIQQLIRSERQELKKKTKSPALKSCP) form a disordered region. D89 carries the post-translational modification 3-methylthioaspartic acid. Positions 101–136 (TLDTAGVKDRKQGRSKYGAKRPKPGAASTASTGKKR) are disordered. Residues 113 to 123 (GRSKYGAKRPK) show a composition bias toward basic residues.

This sequence belongs to the universal ribosomal protein uS12 family. Part of the 30S ribosomal subunit. Contacts proteins S8 and S17. May interact with IF1 in the 30S initiation complex.

Functionally, with S4 and S5 plays an important role in translational accuracy. Its function is as follows. Interacts with and stabilizes bases of the 16S rRNA that are involved in tRNA selection in the A site and with the mRNA backbone. Located at the interface of the 30S and 50S subunits, it traverses the body of the 30S subunit contacting proteins on the other side and probably holding the rRNA structure together. The combined cluster of proteins S8, S12 and S17 appears to hold together the shoulder and platform of the 30S subunit. The protein is Small ribosomal subunit protein uS12 of Cyanothece sp. (strain PCC 7425 / ATCC 29141).